The sequence spans 229 residues: Ribonuclease T (229 aa).

The region spanning V23–F197 is the Exonuclease domain. Mg(2+) is bound by residues D26, E28, H184, and D189. H184 functions as the Proton donor/acceptor in the catalytic mechanism.

Belongs to the RNase T family. Homodimer. It depends on Mg(2+) as a cofactor.

Trims short 3' overhangs of a variety of RNA species, leaving a one or two nucleotide 3' overhang. Responsible for the end-turnover of tRNA: specifically removes the terminal AMP residue from uncharged tRNA (tRNA-C-C-A). Also appears to be involved in tRNA biosynthesis. The polypeptide is Ribonuclease T (Haemophilus influenzae (strain PittEE)).